Here is a 210-residue protein sequence, read N- to C-terminus: tRNA (guanine-N(7)-)-methyltransferase (210 aa).

S-adenosyl-L-methionine contacts are provided by E43, E68, D95, and D117. Residue D117 is part of the active site. Residues K121, D153, and 190–193 (TEYE) each bind substrate.

Belongs to the class I-like SAM-binding methyltransferase superfamily. TrmB family.

The enzyme catalyses guanosine(46) in tRNA + S-adenosyl-L-methionine = N(7)-methylguanosine(46) in tRNA + S-adenosyl-L-homocysteine. The protein operates within tRNA modification; N(7)-methylguanine-tRNA biosynthesis. Catalyzes the formation of N(7)-methylguanine at position 46 (m7G46) in tRNA. The polypeptide is tRNA (guanine-N(7)-)-methyltransferase (Macrococcus caseolyticus (strain JCSC5402) (Macrococcoides caseolyticum)).